We begin with the raw amino-acid sequence, 68 residues long: Small ribosomal subunit protein bS21 (68 aa).

The segment at 36 to 68 is disordered; it reads YEKPSEKRARERAAAVRRSRKLERKRAERDGIR. Residues 37 to 49 are compositionally biased toward basic and acidic residues; that stretch reads EKPSEKRARERAA. Over residues 50–59 the composition is skewed to basic residues; that stretch reads AVRRSRKLER.

The protein belongs to the bacterial ribosomal protein bS21 family.

This is Small ribosomal subunit protein bS21 from Zymomonas mobilis subsp. mobilis (strain ATCC 31821 / ZM4 / CP4).